A 263-amino-acid polypeptide reads, in one-letter code: 7beta-hydroxysteroid dehydrogenase (263 aa).

NADP(+) is bound by residues T17 to G21, R40 to R41, and D66 to F67. Y156 (proton acceptor) is an active-site residue. Residue S240 coordinates NADP(+).

This sequence belongs to the short-chain dehydrogenases/reductases (SDR) family. In terms of assembly, homodimer.

The catalysed reaction is a 7beta-hydroxysteroid + NADP(+) = a 7-oxosteroid + NADPH + H(+). It catalyses the reaction 7-oxolithocholate + NADPH + H(+) = ursodeoxycholate + NADP(+). The enzyme catalyses 7beta-hydroxy-3,12-dioxo-5beta-cholan-24-oate + NADP(+) = dehydrocholate + NADPH + H(+). It carries out the reaction ursocholate + NADP(+) = 3alpha,12alpha-dihydroxy-7-oxo-5beta-cholanate + NADPH + H(+). Its function is as follows. 7beta-hydroxysteroid dehydrogenase that catalyzes the reduction of the 7-oxo group of 7-oxo-lithocholate (7-oxo-LCA), to yield ursodeoxycholate (UDCA). As C.aerofaciens is an intestinal bacterium, this enzyme probably contributes to the formation of UDCA in the human colon. UDCA is regarded as a chemopreventive beneficial secondary bile acid due to its low hydrophobicity; it protects hepatocytes and bile duct epithelial cells against necrosis and apoptosis induced by more hydrophobic secondary bile acids like deoxycholate (DCA). This enzyme is also able to catalyze the reverse reaction, i.e. the oxidation of the 7beta-hydroxy group of UDCA to 7-oxo-LCA. To a lesser extent, is also active on the taurine- and glycine-conjugates of ursodeoxycholate. It is specific for NADPH/NADP(+) as the electron acceptor/donor since it is not active with NADH/NAD(+). In the presence of NADPH, 7beta-HSDH can also reduce dehydrocholate. And is also able to oxidize ursocholate. The protein is 7beta-hydroxysteroid dehydrogenase of Collinsella aerofaciens (strain ATCC 25986 / DSM 3979 / JCM 10188 / KCTC 3647 / NCTC 11838 / VPI 1003).